Reading from the N-terminus, the 159-residue chain is 3-hydroxyacyl-[acyl-carrier-protein] dehydratase FabZ (159 aa).

Residue H58 is part of the active site.

This sequence belongs to the thioester dehydratase family. FabZ subfamily.

The protein resides in the cytoplasm. It carries out the reaction a (3R)-hydroxyacyl-[ACP] = a (2E)-enoyl-[ACP] + H2O. Functionally, involved in unsaturated fatty acids biosynthesis. Catalyzes the dehydration of short chain beta-hydroxyacyl-ACPs and long chain saturated and unsaturated beta-hydroxyacyl-ACPs. The polypeptide is 3-hydroxyacyl-[acyl-carrier-protein] dehydratase FabZ (Helicobacter pylori (strain J99 / ATCC 700824) (Campylobacter pylori J99)).